We begin with the raw amino-acid sequence, 320 residues long: Non-structural protein 5 (320 aa).

The sequence is that of Non-structural protein 5 (S9) from Lymantria dispar (Gypsy moth).